Here is a 63-residue protein sequence, read N- to C-terminus: Cytochrome c oxidase subunit 7C, mitochondrial (63 aa).

The transit peptide at Met1–Arg16 directs the protein to the mitochondrion. Residues Ser17–Asn33 lie on the Mitochondrial matrix side of the membrane. Lys25 carries the post-translational modification N6-acetyllysine; alternate. Residue Lys25 is modified to N6-succinyllysine; alternate. The chain crosses the membrane as a helical span at residues Lys34–Leu60. Residues Leu61 to Gln63 lie on the Mitochondrial intermembrane side of the membrane.

It belongs to the cytochrome c oxidase VIIc family. As to quaternary structure, component of the cytochrome c oxidase (complex IV, CIV), a multisubunit enzyme composed of 14 subunits. The complex is composed of a catalytic core of 3 subunits MT-CO1, MT-CO2 and MT-CO3, encoded in the mitochondrial DNA, and 11 supernumerary subunits COX4I, COX5A, COX5B, COX6A, COX6B, COX6C, COX7A, COX7B, COX7C, COX8 and NDUFA4, which are encoded in the nuclear genome. The complex exists as a monomer or a dimer and forms supercomplexes (SCs) in the inner mitochondrial membrane with NADH-ubiquinone oxidoreductase (complex I, CI) and ubiquinol-cytochrome c oxidoreductase (cytochrome b-c1 complex, complex III, CIII), resulting in different assemblies (supercomplex SCI(1)III(2)IV(1) and megacomplex MCI(2)III(2)IV(2)). Interacts with RAB5IF.

It is found in the mitochondrion inner membrane. Its pathway is energy metabolism; oxidative phosphorylation. Its function is as follows. Component of the cytochrome c oxidase, the last enzyme in the mitochondrial electron transport chain which drives oxidative phosphorylation. The respiratory chain contains 3 multisubunit complexes succinate dehydrogenase (complex II, CII), ubiquinol-cytochrome c oxidoreductase (cytochrome b-c1 complex, complex III, CIII) and cytochrome c oxidase (complex IV, CIV), that cooperate to transfer electrons derived from NADH and succinate to molecular oxygen, creating an electrochemical gradient over the inner membrane that drives transmembrane transport and the ATP synthase. Cytochrome c oxidase is the component of the respiratory chain that catalyzes the reduction of oxygen to water. Electrons originating from reduced cytochrome c in the intermembrane space (IMS) are transferred via the dinuclear copper A center (CU(A)) of subunit 2 and heme A of subunit 1 to the active site in subunit 1, a binuclear center (BNC) formed by heme A3 and copper B (CU(B)). The BNC reduces molecular oxygen to 2 water molecules using 4 electrons from cytochrome c in the IMS and 4 protons from the mitochondrial matrix. This Papio hamadryas (Hamadryas baboon) protein is Cytochrome c oxidase subunit 7C, mitochondrial (COX7C).